We begin with the raw amino-acid sequence, 188 residues long: Ribosome-recycling factor (188 aa).

It belongs to the RRF family.

Its subcellular location is the cytoplasm. Functionally, responsible for the release of ribosomes from messenger RNA at the termination of protein biosynthesis. May increase the efficiency of translation by recycling ribosomes from one round of translation to another. This Akkermansia muciniphila (strain ATCC BAA-835 / DSM 22959 / JCM 33894 / BCRC 81048 / CCUG 64013 / CIP 107961 / Muc) protein is Ribosome-recycling factor.